Reading from the N-terminus, the 156-residue chain is Ribosomal RNA large subunit methyltransferase H (156 aa).

Residues leucine 73, glycine 104, and 123–128 (LSPLTL) each bind S-adenosyl-L-methionine.

Belongs to the RNA methyltransferase RlmH family. As to quaternary structure, homodimer.

The protein resides in the cytoplasm. It carries out the reaction pseudouridine(1915) in 23S rRNA + S-adenosyl-L-methionine = N(3)-methylpseudouridine(1915) in 23S rRNA + S-adenosyl-L-homocysteine + H(+). Its function is as follows. Specifically methylates the pseudouridine at position 1915 (m3Psi1915) in 23S rRNA. In Yersinia pseudotuberculosis serotype O:1b (strain IP 31758), this protein is Ribosomal RNA large subunit methyltransferase H.